A 724-amino-acid chain; its full sequence is Solute carrier organic anion transporter family member 4C1 (724 aa).

A disordered region spans residues 1–80; that stretch reads MQGSKGVENP…PPGSQLSELE (80 aa). At 1-101 the chain is on the cytoplasmic side; sequence MQGSKGVENP…QCLQRCNNPK (101 aa). Residues Ser15 and Ser16 each carry the phosphoserine modification. Thr19 carries the phosphothreonine modification. Ser24, Ser26, and Ser28 each carry phosphoserine. Residues 25–46 show a composition bias toward polar residues; sequence ASPSQVEVSAVASRNQNGGSQP. The chain crosses the membrane as a helical span at residues 102 to 122; the sequence is GFLLHYCLLALTQGIVVNGLV. The Extracellular portion of the chain corresponds to 123–141; the sequence is NISISTIEKRYEMKSSLTG. Residues 142 to 162 traverse the membrane as a helical segment; sequence LISSSYDISFCVLSLFVSFFG. Over 163 to 168 the chain is Cytoplasmic; it reads ERGHKP. The chain crosses the membrane as a helical span at residues 169–193; sequence RWLAFASFMIGLGALVFSLPHFFSG. Residues 194–218 lie on the Extracellular side of the membrane; it reads RYELGTIFEDTCLTRNSTRCASSTS. Residues 219-249 form a helical membrane-spanning segment; the sequence is LLSNYFYVFVLGQLLLGTGGTPLYTLGTAFI. Topologically, residues 250–269 are cytoplasmic; that stretch reads DDSVPTHKSSLYIGIGYSMS. A helical membrane pass occupies residues 270 to 290; sequence ILGPAIGYVLGGQLLTMYIDV. Residues 291-306 are Extracellular-facing; sequence AMGQSSDLTEDDPRWL. Residues 307-331 form a helical membrane-spanning segment; it reads GAWWIGFLLAWLFAWSLIMPFSCFP. At 332 to 376 the chain is on the cytoplasmic side; the sequence is KHLPGTAKIQAGKTSQTHQNNSTSFQHMDENFGKSIKDFPTAVKN. The helical transmembrane segment at 377-398 threads the bilayer; the sequence is LMRNTVFICLVLSTTSEALVTT. Residues 399-418 lie on the Extracellular side of the membrane; sequence GFATFLPKFIENQFGLTSSF. Residues 419–442 form a helical membrane-spanning segment; the sequence is AATLGGAVLIPGAALGQILGGVLV. The Cytoplasmic segment spans residues 443-446; the sequence is SKFK. A helical membrane pass occupies residues 447–470; it reads MKCKNTMKFALCTSGVALMLSFVF. Topologically, residues 471-580 are extracellular; it reads IYAKCENGPF…KTQCSNLPIF (110 aa). The Kazal-like domain occupies 494 to 549; the sequence is GNLTAPCNANCNCLRSYYYPLCGSDGVQYFSPCFAGCLNSVSNRKPKAYYNCSCIE. 3 disulfides stabilise this stretch: Cys500-Cys530, Cys506-Cys526, and Cys515-Cys547. A helical membrane pass occupies residues 581–603; it reads LGIFFITVIFTFMAGTPITVSIL. Residues 604–612 are Cytoplasmic-facing; that stretch reads RCVNHRQRS. The helical transmembrane segment at 613–638 threads the bilayer; sequence LALGVQFMLLRLLGTIPGPIIFGVTI. Residues 639-672 are Extracellular-facing; the sequence is DSTCVLWDINECGTKGACWIYDNIRMAHMLVAIS. The helical transmembrane segment at 673–690 threads the bilayer; sequence VTCKVITIFFNGLAIVLY. The Cytoplasmic portion of the chain corresponds to 691 to 724; that stretch reads KPPPPGTEVSFQSQNVVVSTITVEEDLNKIENEG.

Belongs to the organo anion transporter (TC 2.A.60) family. As to expression, predominantly expressed in kidney and lung but also weakly expressed in brain. Localizes primarily in the proximal straight tubules, the S3 fraction of the nephron.

Its subcellular location is the basolateral cell membrane. The protein localises to the apical cell membrane. The enzyme catalyses estrone 3-sulfate(out) = estrone 3-sulfate(in). The catalysed reaction is L-thyroxine(out) = L-thyroxine(in). It carries out the reaction 3,3',5-triiodo-L-thyronine(out) = 3,3',5-triiodo-L-thyronine(in). It catalyses the reaction chenodeoxycholate(out) = chenodeoxycholate(in). The enzyme catalyses glycocholate(out) = glycocholate(in). The catalysed reaction is L-homoarginine(in) = L-homoarginine(out). It carries out the reaction L-arginine(in) = L-arginine(out). It catalyses the reaction N(omega),N(omega)-dimethyl-L-arginine(out) = N(omega),N(omega)-dimethyl-L-arginine(in). Mediates the transport of organic anions such as steroids (estrone 3-sulfate, chenodeoxycholate, glycocholate) and thyroid hormones (3,3',5-triiodo-L-thyronine (T3), L-thyroxine (T4)), in the kidney. Capable of transporting cAMP and pharmacological substances such as digoxin, ouabain and methotrexate. Transport is independent of sodium, chloride ion, and ATP. Transport activity is stimulated by an acidic extracellular environment due to increased substrate affinity to the transporter. The driving force for this transport activity is currently not known. The role of hydrogencarbonate (HCO3(-), bicarbonate) as the probable counteranion that exchanges for organic anions is still not well defined. Functions as an uptake transporter at the apical membrane, suggesting a role in renal reabsorption. Involved in the renal secretion of the uremic toxin ADMA (N(omega),N(omega)-dimethyl-L-arginine or asymmetrical dimethylarginine), which is associated to cardiovascular events and mortality, and the structurally related amino acids L-arginine and L-homoarginine (a cardioprotective biomarker). Can act bidirectionally, suggesting a dual protective role of this transport protein; exporting L-homoarginine after being synthesized in proximal tubule cells, and mediating uptake of ADMA from the blood into proximal tubule cells where it is degraded by the enzyme dimethylarginine dimethylaminohydrolase 1 (DDAH1). May be involved in sperm maturation by enabling directed movement of organic anions and compounds within or between cells. This ion-transporting process is important to maintain the strict epididymal homeostasis necessary for sperm maturation. May have a role in secretory functions since seminal vesicle epithelial cells are assumed to secrete proteins involved in decapacitation by modifying surface proteins to facilitate the acquisition of the ability to fertilize the egg. The chain is Solute carrier organic anion transporter family member 4C1 from Rattus norvegicus (Rat).